The sequence spans 508 residues: Steroid 17-alpha-hydroxylase/17,20 lyase (508 aa).

Asn-202 is a substrate binding site. Cys-442 is a heme binding site.

The protein belongs to the cytochrome P450 family. Heme is required as a cofactor.

It is found in the endoplasmic reticulum membrane. The protein localises to the microsome membrane. The catalysed reaction is a C21-steroid + reduced [NADPH--hemoprotein reductase] + O2 = a 17alpha-hydroxy-C21-steroid + oxidized [NADPH--hemoprotein reductase] + H2O + H(+). It carries out the reaction progesterone + reduced [NADPH--hemoprotein reductase] + O2 = 17alpha-hydroxyprogesterone + oxidized [NADPH--hemoprotein reductase] + H2O + H(+). The enzyme catalyses pregnenolone + reduced [NADPH--hemoprotein reductase] + O2 = 17alpha-hydroxypregnenolone + oxidized [NADPH--hemoprotein reductase] + H2O + H(+). It catalyses the reaction 17alpha-hydroxyprogesterone + reduced [NADPH--hemoprotein reductase] + O2 = androst-4-ene-3,17-dione + acetate + oxidized [NADPH--hemoprotein reductase] + H2O + 2 H(+). The catalysed reaction is 17alpha-hydroxyprogesterone + reduced [NADPH--hemoprotein reductase] + O2 = 16alpha,17alpha-dihydroxyprogesterone + oxidized [NADPH--hemoprotein reductase] + H2O + H(+). It carries out the reaction 16alpha,17alpha-dihydroxyprogesterone + reduced [NADPH--hemoprotein reductase] + O2 = 6beta,16alpha,17alpha-trihydroxyprogesterone + oxidized [NADPH--hemoprotein reductase] + H2O + H(+). The enzyme catalyses 17alpha-hydroxypregnenolone + reduced [NADPH--hemoprotein reductase] + O2 = 3beta-hydroxyandrost-5-en-17-one + acetate + oxidized [NADPH--hemoprotein reductase] + H2O + 2 H(+). It catalyses the reaction 16alpha,17alpha-dihydroxypregnenolone + reduced [NADPH--hemoprotein reductase] + O2 = 3beta,16alpha-dihydroxy-androst-5-en-17-one + acetate + oxidized [NADPH--hemoprotein reductase] + H2O + 2 H(+). The catalysed reaction is 3beta-hydroxyandrost-5-en-17-one + reduced [NADPH--hemoprotein reductase] + O2 = 3beta,16alpha-dihydroxy-androst-5-en-17-one + oxidized [NADPH--hemoprotein reductase] + H2O + H(+). It carries out the reaction androst-4-ene-3,17-dione + reduced [NADPH--hemoprotein reductase] + O2 = 16alpha-hydroxyandrost-4-ene-3,17-dione + oxidized [NADPH--hemoprotein reductase] + H2O + H(+). It participates in steroid hormone biosynthesis. The protein operates within steroid biosynthesis; glucocorticoid biosynthesis. With respect to regulation, regulated predominantly by intracellular cAMP levels. The 17,20-lyase activity is stimulated by cytochrome b5, which acts as an allosteric effector increasing the Vmax of the lyase activity. A cytochrome P450 monooxygenase involved in corticoid and androgen biosynthesis. Catalyzes 17-alpha hydroxylation of C21 steroids, which is common for both pathways. A second oxidative step, required only for androgen synthesis, involves an acyl-carbon cleavage. The 17-alpha hydroxy intermediates, as part of adrenal glucocorticoids biosynthesis pathway, are precursors of cortisol. Hydroxylates steroid hormones, pregnenolone and progesterone to form 17-alpha hydroxy metabolites, followed by the cleavage of the C17-C20 bond to form C19 steroids, dehydroepiandrosterone (DHEA) and androstenedione. Has 16-alpha hydroxylase activity. Catalyzes 16-alpha hydroxylation of 17-alpha hydroxy pregnenolone, followed by the cleavage of the C17-C20 bond to form 16-alpha-hydroxy DHEA. Also 16-alpha hydroxylates androgens, relevant for estriol synthesis. Mechanistically, uses molecular oxygen inserting one oxygen atom into a substrate, and reducing the second into a water molecule, with two electrons provided by NADPH via cytochrome P450 reductase (CPR; NADPH-ferrihemoprotein reductase). The protein is Steroid 17-alpha-hydroxylase/17,20 lyase (CYP17A1) of Papio cynocephalus (Yellow baboon).